The primary structure comprises 74 residues: U4-theraphotoxin-Cg1a (74 aa).

An N-terminal signal peptide occupies residues 1–19 (MNATIFALLLLLNLAMHNA). The propeptide occupies 20-39 (AEQSSETDMDDTLLIPEINR). Disulfide bonds link Cys42–Cys56, Cys49–Cys61, and Cys55–Cys71.

This sequence belongs to the neurotoxin 36 family. 01 subfamily. As to expression, expressed by the venom gland.

It is found in the secreted. Functionally, probable ion channel inhibitor. The sequence is that of U4-theraphotoxin-Cg1a from Chilobrachys guangxiensis (Chinese earth tiger tarantula).